A 360-amino-acid polypeptide reads, in one-letter code: MATEAAVVSNPNTLAKYLKLDQKGSIMAEYIWIDADGETRSKSRTLKEKEYTPEDLPMWNFDGSSTGQAPGDNSDVYLKPVAVFPDPFRGSPNILVLSECWNADGTPNKYNYRHECAKLMEAHAAHEPWFGLEQEYTLLDLSNRPFGWPANGFPAPQGPYYCGVGTGKVVQRDIVDAHYKACLYSGVKISGTNAEVMPAQWEFQVGPCVGIEMGDHLWLARFLLARIAEEFGAKVSVDPKPIPGDWNGAGLHSNFSTKEMRVEGGMKHIEAAIKKLEGRHKEHIAVYGEGNEKRLTGRHETGAIDQFSYGVANRGASIRIPREYTAKGYGYFEDRRPASNADPYRITGILMETIYGSVDN.

A GS beta-grasp domain is found at 26–105 (IMAEYIWIDA…VLSECWNADG (80 aa)). Residues 112 to 360 (YRHECAKLME…METIYGSVDN (249 aa)) form the GS catalytic domain.

This sequence belongs to the glutamine synthetase family. In terms of assembly, homooctamer.

The protein localises to the cytoplasm. It catalyses the reaction L-glutamate + NH4(+) + ATP = L-glutamine + ADP + phosphate + H(+). This is Glutamine synthetase (GLN1) from Colletotrichum gloeosporioides (Anthracnose fungus).